The primary structure comprises 436 residues: Mitochondrial substrate carrier family protein Y (436 aa).

A disordered region spans residues 1–102 (MENNNKNINT…NINNNNINKK (102 aa)). At 1-137 (MENNNKNINT…GGFLAGLSRN (137 aa)) the chain is on the mitochondrial intermembrane side. Solcar repeat units follow at residues 135–226 (SRNV…TLKY) and 236–334 (HDTL…LKKQ). The helical transmembrane segment at 138 to 158 (VTRIIGSFSSGMAEESAGYPL) threads the bilayer. Topologically, residues 159–194 (DLIKTRIQLSQSGVSGGGGTNTSIIKIFKDVIKTEG) are mitochondrial matrix. Residues 195 to 215 (VIGLFKGLSSPLILSALVTAI) traverse the membrane as a helical segment. Residues 216–238 (QFGLFEDTLKYFRKHQYFKNHDT) lie on the Mitochondrial intermembrane side of the membrane. Residues 239 to 259 (LSLLFSGSIAGFAQSFITCPV) form a helical membrane-spanning segment. Topologically, residues 260–313 (DLVKIQMQIQGIPSSQPNSNNNNNNNKAKGNSYFTKLIYREKGLLGFYQGLSPT) are mitochondrial matrix. Residues 314–334 (LFRDVPGLAIFFTTYETLKKQ) traverse the membrane as a helical segment. Residues 335–347 (FGQPELSTQSPTE) are Mitochondrial intermembrane-facing. Residues 348-368 (FIKSFIPIVLSGGSAGVFYHG) form a helical membrane-spanning segment. The stretch at 350–436 (KSFIPIVLSG…FLVYEMVINL (87 aa)) is one Solcar 3 repeat. At 369-413 (LTHPFDIAKTLIQSDRSATKYKGTFDCLKQVYQNQGPKSLFKGFS) the chain is on the mitochondrial matrix side. Residues 414-434 (AVAIKSFQSNAVGFLVYEMVI) form a helical membrane-spanning segment. Over 435-436 (NL) the chain is Mitochondrial intermembrane.

Belongs to the mitochondrial carrier (TC 2.A.29) family.

The protein localises to the mitochondrion inner membrane. Its function is as follows. Mitochondrial solute carriers shuttle metabolites, nucleotides, and cofactors through the mitochondrial inner membrane. In Dictyostelium discoideum (Social amoeba), this protein is Mitochondrial substrate carrier family protein Y (mcfY).